The sequence spans 57 residues: uncharacterized protein (57 aa).

The segment at 1–57 (MPHYVVVKSPMRRRRSPRRRSPRVCYSPRRVACSPRRRSPRRRSPRRRSPRRSIVVY) is disordered. Basic residues predominate over residues 10–22 (PMRRRRSPRRRSP). The span at 23-34 (RVCYSPRRVACS) shows a compositional bias: low complexity. Positions 35 to 51 (PRRRSPRRRSPRRRSPR) are enriched in basic residues.

This is an uncharacterized protein from Acheta domesticus (House cricket).